Reading from the N-terminus, the 194-residue chain is Histone H1 (194 aa).

An N-acetylalanine; partial modification is found at alanine 1. Residues 1–14 are compositionally biased toward low complexity; that stretch reads AEVAPAPAAAAPAK. 2 disordered regions span residues 1–31 and 105–194; these read AEVAPAPAAAAPAKAPKKKAAAKPKKSGPAV and AKKP…AAKK. Residues 15 to 26 show a composition bias toward basic residues; it reads APKKKAAAKPKK. One can recognise an H15 domain in the interval 27-100; it reads SGPAVGELAG…GASGSFKLNK (74 aa). Residues 116-194 show a composition bias toward basic residues; the sequence is KAKKVAAKKP…KVKKPAAAKK (79 aa). Serine 145, serine 161, and serine 182 each carry phosphoserine.

The protein belongs to the histone H1/H5 family.

Its subcellular location is the nucleus. The protein resides in the chromosome. In terms of biological role, histones H1 are necessary for the condensation of nucleosome chains into higher-order structures. This chain is Histone H1, found in Salmo trutta (Brown trout).